A 125-amino-acid chain; its full sequence is Histone H2A (125 aa).

Over residues 1–18 (MSGRGKGGKARAKAKSRS) the composition is skewed to basic residues. The tract at residues 1-21 (MSGRGKGGKARAKAKSRSSRA) is disordered. The residue at position 2 (serine 2) is an N-acetylserine. Serine 2 carries the post-translational modification Phosphoserine. At glutamine 104 the chain carries N5-methylglutamine.

This sequence belongs to the histone H2A family. In terms of assembly, the nucleosome is a histone octamer containing two molecules each of H2A, H2B, H3 and H4 assembled in one H3-H4 heterotetramer and two H2A-H2B heterodimers. The octamer wraps approximately 147 bp of DNA.

The protein localises to the nucleus. It is found in the chromosome. In terms of biological role, core component of nucleosome. Nucleosomes wrap and compact DNA into chromatin, limiting DNA accessibility to the cellular machineries which require DNA as a template. Histones thereby play a central role in transcription regulation, DNA repair, DNA replication and chromosomal stability. DNA accessibility is regulated via a complex set of post-translational modifications of histones, also called histone code, and nucleosome remodeling. This chain is Histone H2A, found in Asterias rubens (Common European starfish).